A 126-amino-acid chain; its full sequence is FCS-Like Zinc finger 7 (126 aa).

Residues 72–116 (SFLVNCGFCKRGLAPGRDIYMYKGDAAFCSIECREQQMEHDEGKT) form an FLZ-type zinc finger.

The protein belongs to the FLZ family. Interacts with KIN10 and KIN11 via its FLZ-type zinc finger domain. Interacts with KINB3 via its N-terminal part. Forms homodimer and heterodimer with FLZ1, FLZ2 and FLZ15 in vitro.

The protein resides in the cytoplasm. It localises to the nucleus. May act as an adapter to facilitate the interaction of SnRK1 complex with effector proteins, conferring tissue- and stimulus-type specific differences in the SnRK1 regulation pathway. In Arabidopsis thaliana (Mouse-ear cress), this protein is FCS-Like Zinc finger 7.